The sequence spans 392 residues: NADH-quinone oxidoreductase subunit D (392 aa).

The protein belongs to the complex I 49 kDa subunit family. In terms of assembly, NDH-1 is composed of 14 different subunits. Subunits NuoB, C, D, E, F, and G constitute the peripheral sector of the complex.

It localises to the cell inner membrane. It carries out the reaction a quinone + NADH + 5 H(+)(in) = a quinol + NAD(+) + 4 H(+)(out). In terms of biological role, NDH-1 shuttles electrons from NADH, via FMN and iron-sulfur (Fe-S) centers, to quinones in the respiratory chain. The immediate electron acceptor for the enzyme in this species is believed to be ubiquinone. Couples the redox reaction to proton translocation (for every two electrons transferred, four hydrogen ions are translocated across the cytoplasmic membrane), and thus conserves the redox energy in a proton gradient. This Rhodospirillum rubrum (strain ATCC 11170 / ATH 1.1.1 / DSM 467 / LMG 4362 / NCIMB 8255 / S1) protein is NADH-quinone oxidoreductase subunit D.